A 705-amino-acid polypeptide reads, in one-letter code: Polyribonucleotide nucleotidyltransferase (705 aa).

Mg(2+)-binding residues include aspartate 492 and aspartate 498. Residues 559-618 (PLMITMKVSPDKIRHIIGPGGKIINKIIDETGVEIDIDDDGSVYILAQDQESGNRAKEII) form the KH domain. An S1 motif domain is found at 628 to 696 (GDIYEGRVKK…ELGRINLSRK (69 aa)).

Belongs to the polyribonucleotide nucleotidyltransferase family. Mg(2+) serves as cofactor.

It is found in the cytoplasm. It catalyses the reaction RNA(n+1) + phosphate = RNA(n) + a ribonucleoside 5'-diphosphate. Involved in mRNA degradation. Catalyzes the phosphorolysis of single-stranded polyribonucleotides processively in the 3'- to 5'-direction. The polypeptide is Polyribonucleotide nucleotidyltransferase (Halothermothrix orenii (strain H 168 / OCM 544 / DSM 9562)).